Consider the following 419-residue polypeptide: UDP-N-acetylglucosamine 1-carboxyvinyltransferase (419 aa).

Position 22 to 23 (22 to 23 (KN)) interacts with phosphoenolpyruvate. Arg-93 is a UDP-N-acetyl-alpha-D-glucosamine binding site. Cys-117 (proton donor) is an active-site residue. Residue Cys-117 is modified to 2-(S-cysteinyl)pyruvic acid O-phosphothioketal. UDP-N-acetyl-alpha-D-glucosamine contacts are provided by Asp-306 and Ile-328.

Belongs to the EPSP synthase family. MurA subfamily.

It localises to the cytoplasm. It catalyses the reaction phosphoenolpyruvate + UDP-N-acetyl-alpha-D-glucosamine = UDP-N-acetyl-3-O-(1-carboxyvinyl)-alpha-D-glucosamine + phosphate. It participates in cell wall biogenesis; peptidoglycan biosynthesis. In terms of biological role, cell wall formation. Adds enolpyruvyl to UDP-N-acetylglucosamine. The polypeptide is UDP-N-acetylglucosamine 1-carboxyvinyltransferase (Vesicomyosocius okutanii subsp. Calyptogena okutanii (strain HA)).